The following is a 446-amino-acid chain: Tubulin beta-3 chain (446 aa).

Positions 11, 69, 138, 142, 143, 144, 204, and 226 each coordinate GTP. Glu-69 contributes to the Mg(2+) binding site. The segment at Glu-421–Ala-446 is disordered. Residues Thr-429 to Ala-446 are compositionally biased toward acidic residues.

This sequence belongs to the tubulin family. Dimer of alpha and beta chains. A typical microtubule is a hollow water-filled tube with an outer diameter of 25 nm and an inner diameter of 15 nM. Alpha-beta heterodimers associate head-to-tail to form protofilaments running lengthwise along the microtubule wall with the beta-tubulin subunit facing the microtubule plus end conferring a structural polarity. Microtubules usually have 13 protofilaments but different protofilament numbers can be found in some organisms and specialized cells. The cofactor is Mg(2+). Expressed in roots, second node, leaf sheaths, and suspension cultured cells.

It localises to the cytoplasm. It is found in the cytoskeleton. Its function is as follows. Tubulin is the major constituent of microtubules, a cylinder consisting of laterally associated linear protofilaments composed of alpha- and beta-tubulin heterodimers. Microtubules grow by the addition of GTP-tubulin dimers to the microtubule end, where a stabilizing cap forms. Below the cap, tubulin dimers are in GDP-bound state, owing to GTPase activity of alpha-tubulin. In Oryza sativa subsp. japonica (Rice), this protein is Tubulin beta-3 chain (TUBB3).